The sequence spans 411 residues: Glycogen synthase kinase-3 homolog MsK-2 (411 aa).

A Protein kinase domain is found at 74–358 (YMAERAVGQG…ALEALVHPFF (285 aa)). Residues 80 to 88 (VGQGSFGVV) and Lys103 each bind ATP. The active-site Proton acceptor is Asp199. Position 234 is a phosphotyrosine (Tyr234).

This sequence belongs to the protein kinase superfamily. CMGC Ser/Thr protein kinase family. GSK-3 subfamily. Absent in leaves and petioles while a moderate expression is seen in the stems, roots, and nodes.

The catalysed reaction is L-seryl-[protein] + ATP = O-phospho-L-seryl-[protein] + ADP + H(+). It carries out the reaction L-threonyl-[protein] + ATP = O-phospho-L-threonyl-[protein] + ADP + H(+). The protein is Glycogen synthase kinase-3 homolog MsK-2 (MSK-2) of Medicago sativa (Alfalfa).